We begin with the raw amino-acid sequence, 215 residues long: 3-demethoxyubiquinol 3-hydroxylase (215 aa).

Fe cation-binding residues include Glu64, Glu94, His97, Glu146, Glu178, and His181.

It belongs to the COQ7 family. It depends on Fe cation as a cofactor.

The protein localises to the cell membrane. The enzyme catalyses a 5-methoxy-2-methyl-3-(all-trans-polyprenyl)benzene-1,4-diol + AH2 + O2 = a 3-demethylubiquinol + A + H2O. It participates in cofactor biosynthesis; ubiquinone biosynthesis. In terms of biological role, catalyzes the hydroxylation of 2-nonaprenyl-3-methyl-6-methoxy-1,4-benzoquinol during ubiquinone biosynthesis. This Pseudomonas aeruginosa (strain LESB58) protein is 3-demethoxyubiquinol 3-hydroxylase.